Consider the following 128-residue polypeptide: Large ribosomal subunit protein uL22 (128 aa).

The protein belongs to the universal ribosomal protein uL22 family. Part of the 50S ribosomal subunit.

This protein binds specifically to 23S rRNA; its binding is stimulated by other ribosomal proteins, e.g. L4, L17, and L20. It is important during the early stages of 50S assembly. It makes multiple contacts with different domains of the 23S rRNA in the assembled 50S subunit and ribosome. Its function is as follows. The globular domain of the protein is located near the polypeptide exit tunnel on the outside of the subunit, while an extended beta-hairpin is found that lines the wall of the exit tunnel in the center of the 70S ribosome. The chain is Large ribosomal subunit protein uL22 from Methylocella silvestris (strain DSM 15510 / CIP 108128 / LMG 27833 / NCIMB 13906 / BL2).